A 1255-amino-acid polypeptide reads, in one-letter code: Membrane-associated guanylate kinase, WW and PDZ domain-containing protein 1 (1255 aa).

Residues 17-105 (ECTVKRGPQG…AVTFKAVRQG (89 aa)) enclose the PDZ 1 domain. The Guanylate kinase-like domain occupies 96–287 (AVTFKAVRQG…APITDPSQKF (192 aa)). 103–110 (RQGGRLNK) serves as a coordination point for ATP. 2 disordered regions span residues 208-227 (HSLQ…SYND) and 235-265 (HTEN…TLQE). A WW 1 domain is found at 300 to 333 (GPLPENWEMAYTENGEVYFIDHNAKTTSWLDPRC). A Phosphoserine modification is found at Ser357. A WW 2 domain is found at 359–392 (LELPAGWEKIEDPVYGVYYVDHINRKTQYENPVL). The disordered stretch occupies residues 395-462 (KRKRQLEQQQ…QGKPFFTRNP (68 aa)). Over residues 402–414 (QQQQQQQHQQQPQ) the composition is skewed to low complexity. Positions 434–444 (PVAPSHPPSNP) are enriched in pro residues. One can recognise a PDZ 2 domain in the interval 471–553 (HTKLRKSSRG…GASVDLELCR (83 aa)). The span at 585–601 (QETYDSPASHSSKTGKV) shows a compositional bias: polar residues. Disordered regions lie at residues 585–622 (QETY…SSHG) and 719–820 (QRGG…GERD). One can recognise a PDZ 3 domain in the interval 642–720 (TVHIVKGPMG…GSEVTLLVQR (79 aa)). 2 positions are modified to phosphoserine: Ser729 and Ser740. The span at 741–755 (QNSSQHSVSSLRSLH) shows a compositional bias: low complexity. Ser799 carries the post-translational modification Phosphoserine. Positions 840 to 922 (DIFLWRKETG…QGHVNLTVRR (83 aa)) constitute a PDZ 4 domain. Positions 932–984 (ENEVPSPASSHHSSNQPASLTEEKRTPQGSQNSLNTVSSGSGSTSGIGSGGGG) are disordered. Composition is skewed to polar residues over residues 938 to 950 (PASS…QPAS) and 958 to 967 (PQGSQNSLNT). Gly residues predominate over residues 974–984 (STSGIGSGGGG). The 97-residue stretch at 997–1093 (DVEIRRGENE…TVTLRIIPGD (97 aa)) folds into the PDZ 5 domain. Phosphoserine is present on Ser1070. A compositionally biased stretch (polar residues) spans 1111–1129 (TTTHAPSQQGTQETRTTTK). The tract at residues 1111–1142 (TTTHAPSQQGTQETRTTTKPKPDSQFEFKGPQ) is disordered. A PDZ 6 domain is found at 1151 to 1233 (TVELERGAKG…RVRLFLRRGD (83 aa)).

In terms of assembly, part of a complex composed of AMOTL2, MAGI1 and CDH5, within the complex AMOTL2 acts as a scaffold protein for the interaction of MAGI1 with CDH5. The complex is required for coupling actin fibers to cell junctions in endothelial cells. Interacts through its WW 2 domain with SYNPO and through its PDZ 5 domain with ACTN4. Interacts with cytoplasmic domain of ADGRB1. Interacts via its WW domains with DRPLA. Interacts with ESAM, LRP2 and CXADR. May interact with CTNNB1. Interacts through its PDZ 1 domain with NET1. Interacts with ASIC3 and AMOT. Interacts with FCHSD2. Interacts with IGSF5/JAM4 and through its PDZ 2 and 3 domains with NPHS1 forming a tripartite complex. Interacts with DDN. May interact (via PDZ domain) with RAPGEF2. Interacts with DLL1. Interacts with KCNJ10 and possibly with KCNJ10/KCNJ16 heterodimer; this interaction may facilitate KCNJ10/KCNJ16 potassium channel expression at the basolateral membrane in kidney tubular cells. Interacts with PRRG4 (via cytoplasmic domain).

It is found in the cell junction. The protein localises to the tight junction. It localises to the cytoplasm. The protein resides in the membrane. Functionally, plays a role in coupling actin fibers to cell junctions in endothelial cells, via its interaction with AMOTL2 and CDH5. May regulate acid-induced ASIC3 currents by modulating its expression at the cell surface. The chain is Membrane-associated guanylate kinase, WW and PDZ domain-containing protein 1 (Magi1) from Rattus norvegicus (Rat).